Reading from the N-terminus, the 491-residue chain is NADH-quinone oxidoreductase subunit N (491 aa).

Helical transmembrane passes span 11 to 31 (ATAE…TTFA), 38 to 58 (LAYG…YNTA), 74 to 94 (LLGD…LLYG), 106 to 126 (PEYY…VTSN), 128 to 148 (LLSM…LVAF), 163 to 183 (FVLG…LYGA), 206 to 226 (LLFG…VVPF), 243 to 263 (LIIA…LLVW), 272 to 292 (WQTM…LAAI), 301 to 321 (LAYS…SGVV), 336 to 356 (MFYA…IILL), 379 to 399 (FAAM…FIGF), 410 to 430 (VAAG…IGAF), and 465 to 485 (LAIA…TFVL).

The protein belongs to the complex I subunit 2 family. As to quaternary structure, NDH-1 is composed of 14 different subunits. Subunits NuoA, H, J, K, L, M, N constitute the membrane sector of the complex.

It localises to the cell inner membrane. It catalyses the reaction a quinone + NADH + 5 H(+)(in) = a quinol + NAD(+) + 4 H(+)(out). Its function is as follows. NDH-1 shuttles electrons from NADH, via FMN and iron-sulfur (Fe-S) centers, to quinones in the respiratory chain. The immediate electron acceptor for the enzyme in this species is believed to be ubiquinone. Couples the redox reaction to proton translocation (for every two electrons transferred, four hydrogen ions are translocated across the cytoplasmic membrane), and thus conserves the redox energy in a proton gradient. The polypeptide is NADH-quinone oxidoreductase subunit N (Azoarcus sp. (strain BH72)).